A 412-amino-acid chain; its full sequence is Cysteine desulfurase (412 aa).

Lys-231 is subject to N6-(pyridoxal phosphate)lysine. Residue Cys-369 is the Cysteine persulfide intermediate of the active site.

It belongs to the class-V pyridoxal-phosphate-dependent aminotransferase family. Csd subfamily. In terms of assembly, homodimer. Interacts with SufE and the SufBCD complex composed of SufB, SufC and SufD. The interaction with SufE is required to mediate the direct transfer of the sulfur atom from the S-sulfanylcysteine. The cofactor is pyridoxal 5'-phosphate.

It is found in the cytoplasm. The enzyme catalyses (sulfur carrier)-H + L-cysteine = (sulfur carrier)-SH + L-alanine. The catalysed reaction is L-selenocysteine + AH2 = hydrogenselenide + L-alanine + A + H(+). Its pathway is cofactor biosynthesis; iron-sulfur cluster biosynthesis. Cysteine desulfurases mobilize the sulfur from L-cysteine to yield L-alanine, an essential step in sulfur metabolism for biosynthesis of a variety of sulfur-containing biomolecules. Component of the suf operon, which is activated and required under specific conditions such as oxidative stress and iron limitation. Acts as a potent selenocysteine lyase in vitro, that mobilizes selenium from L-selenocysteine. Selenocysteine lyase activity is however unsure in vivo. In Dickeya dadantii (strain 3937) (Erwinia chrysanthemi (strain 3937)), this protein is Cysteine desulfurase (sufS).